A 137-amino-acid polypeptide reads, in one-letter code: Large ribosomal subunit protein uL16 (137 aa).

The protein belongs to the universal ribosomal protein uL16 family. Part of the 50S ribosomal subunit.

Its function is as follows. Binds 23S rRNA and is also seen to make contacts with the A and possibly P site tRNAs. The polypeptide is Large ribosomal subunit protein uL16 (Stutzerimonas stutzeri (strain A1501) (Pseudomonas stutzeri)).